The sequence spans 120 residues: NADH-ubiquinone oxidoreductase chain 3 (120 aa).

A run of 3 helical transmembrane segments spans residues 10-30 (ILIL…LGYF), 62-82 (FYLV…LFPF), and 89-109 (MTLF…IGFI).

It belongs to the complex I subunit 3 family.

Its subcellular location is the mitochondrion membrane. The catalysed reaction is a ubiquinone + NADH + 5 H(+)(in) = a ubiquinol + NAD(+) + 4 H(+)(out). Core subunit of the mitochondrial membrane respiratory chain NADH dehydrogenase (Complex I) that is believed to belong to the minimal assembly required for catalysis. Complex I functions in the transfer of electrons from NADH to the respiratory chain. The immediate electron acceptor for the enzyme is believed to be ubiquinone. This chain is NADH-ubiquinone oxidoreductase chain 3 (nad3), found in Dictyostelium citrinum (Slime mold).